A 968-amino-acid chain; its full sequence is A disintegrin and metalloproteinase with thrombospondin motifs 1 (968 aa).

Disordered stretches follow at residues 1–23 (MQPK…DVQR) and 177–253 (APAV…RKKR). An N-terminal signal peptide occupies residues 1–48 (MQPKVPLGSRKQKPCSDMGDVQRAARSRGSLSAHMLLLLLASITMLLC). The propeptide occupies 49–253 (ARGAHGRPTE…SGPGSIRKKR (205 aa)). A Cysteine switch motif is present at residues 204–211 (AKCGVMDD). C206 is a Zn(2+) binding site. The span at 214-229 (LPTSDSRPESQNTRNQ) shows a compositional bias: polar residues. Residues 259-468 (RYVETMLVAD…GHGECLMDKP (210 aa)) form the Peptidase M12B domain. E262, D345, and D352 together coordinate Ca(2+). Intrachain disulfides connect C334–C386, C363–C368, C380–C463, and C418–C447. A Zn(2+)-binding site is contributed by H402. The active site involves E403. Residues H406 and H412 each contribute to the Zn(2+) site. 2 residues coordinate Ca(2+): C463 and D466. In terms of domain architecture, Disintegrin spans 477–559 (DLPGTLYDAN…TDMKHFATPV (83 aa)). 4 disulfide bridges follow: C489-C512, C500-C522, C507-C541, and C535-C546. N548 carries N-linked (GlcNAc...) asparagine glycosylation. The region spanning 560–615 (HGSWGPWGPWGDCSRTCGGGVQYTMRECDNPVPKNGGKYCEGKRVRYRSCNIEDCP) is the TSP type-1 1 domain. 3 disulfides stabilise this stretch: C572–C609, C576–C614, and C587–C599. N721, N765, and N783 each carry an N-linked (GlcNAc...) asparagine glycan. The interval 726–850 (KKMSGIVTST…YFMKKKTESF (125 aa)) is spacer. TSP type-1 domains are found at residues 855–911 (TFSE…LPCP) and 912–968 (HWQV…TQCS). N-linked (GlcNAc...) asparagine glycosylation occurs at N946.

Requires Zn(2+) as cofactor. The precursor is cleaved by a furin endopeptidase. In terms of processing, glycosylated. Can be O-fucosylated by POFUT2 on a serine or a threonine residue found within the consensus sequence C1-X(2)-(S/T)-C2-G of the TSP type-1 repeat domains where C1 and C2 are the first and second cysteine residue of the repeat, respectively. Fucosylated repeats can then be further glycosylated by the addition of a beta-1,3-glucose residue by the glucosyltransferase, B3GALTL. Fucosylation mediates the efficient secretion of ADAMTS family members. Can also be C-glycosylated with one or two mannose molecules on tryptophan residues within the consensus sequence W-X-X-W of the TPRs, and N-glycosylated. These other glycosylations can also facilitate secretion.

The protein resides in the secreted. It is found in the extracellular space. Its subcellular location is the extracellular matrix. Functionally, metalloprotease which cleaves aggrecan, a cartilage proteoglycan, at the '1691-Glu-|-Leu-1692' site (within the chondroitin sulfate attachment domain), and may be involved in its turnover. Also cleaves COMP. Has angiogenic inhibitor activity. May play a critical role in follicular rupture. The sequence is that of A disintegrin and metalloproteinase with thrombospondin motifs 1 (Adamts1) from Mus musculus (Mouse).